Reading from the N-terminus, the 879-residue chain is DNA mismatch repair protein MutS (879 aa).

639 to 646 is an ATP binding site; that stretch reads GPNMGGKS.

The protein belongs to the DNA mismatch repair MutS family.

In terms of biological role, this protein is involved in the repair of mismatches in DNA. It is possible that it carries out the mismatch recognition step. This protein has a weak ATPase activity. The polypeptide is DNA mismatch repair protein MutS (Aromatoleum aromaticum (strain DSM 19018 / LMG 30748 / EbN1) (Azoarcus sp. (strain EbN1))).